The following is a 475-amino-acid chain: Glutamyl-tRNA(Gln) amidotransferase subunit A (475 aa).

Catalysis depends on charge relay system residues K76 and S151. S175 functions as the Acyl-ester intermediate in the catalytic mechanism.

Belongs to the amidase family. GatA subfamily. In terms of assembly, heterotrimer of A, B and C subunits.

It catalyses the reaction L-glutamyl-tRNA(Gln) + L-glutamine + ATP + H2O = L-glutaminyl-tRNA(Gln) + L-glutamate + ADP + phosphate + H(+). Allows the formation of correctly charged Gln-tRNA(Gln) through the transamidation of misacylated Glu-tRNA(Gln) in organisms which lack glutaminyl-tRNA synthetase. The reaction takes place in the presence of glutamine and ATP through an activated gamma-phospho-Glu-tRNA(Gln). In Pelodictyon phaeoclathratiforme (strain DSM 5477 / BU-1), this protein is Glutamyl-tRNA(Gln) amidotransferase subunit A.